We begin with the raw amino-acid sequence, 212 residues long: Putative aryl-alcohol dehydrogenase AAD6 (212 aa).

The active-site Proton donor is Tyr-76.

Belongs to the aldo/keto reductase family. Aldo/keto reductase 2 subfamily.

The protein is Putative aryl-alcohol dehydrogenase AAD6 of Saccharomyces cerevisiae (strain ATCC 204508 / S288c) (Baker's yeast).